Reading from the N-terminus, the 112-residue chain is UPF0375 protein R05A10.4 (112 aa).

An N-terminal signal peptide occupies residues 1-19 (MNLSIFSAIIFSITIASSA). Asparagine 59 is a glycosylation site (N-linked (GlcNAc...) asparagine).

The protein belongs to the UPF0375 family.

It is found in the secreted. The polypeptide is UPF0375 protein R05A10.4 (Caenorhabditis elegans).